A 396-amino-acid chain; its full sequence is Probable tRNA sulfurtransferase (396 aa).

The THUMP domain occupies 58 to 169; it reads NQFIEKLKMV…KKNIYVFTRS (112 aa). ATP is bound by residues 187 to 188, 212 to 213, Arg269, Gly291, and Gln300; these read LL and YF.

The protein belongs to the ThiI family.

It is found in the cytoplasm. It carries out the reaction [ThiI sulfur-carrier protein]-S-sulfanyl-L-cysteine + a uridine in tRNA + 2 reduced [2Fe-2S]-[ferredoxin] + ATP + H(+) = [ThiI sulfur-carrier protein]-L-cysteine + a 4-thiouridine in tRNA + 2 oxidized [2Fe-2S]-[ferredoxin] + AMP + diphosphate. The enzyme catalyses [ThiS sulfur-carrier protein]-C-terminal Gly-Gly-AMP + S-sulfanyl-L-cysteinyl-[cysteine desulfurase] + AH2 = [ThiS sulfur-carrier protein]-C-terminal-Gly-aminoethanethioate + L-cysteinyl-[cysteine desulfurase] + A + AMP + 2 H(+). The protein operates within cofactor biosynthesis; thiamine diphosphate biosynthesis. Catalyzes the ATP-dependent transfer of a sulfur to tRNA to produce 4-thiouridine in position 8 of tRNAs, which functions as a near-UV photosensor. Also catalyzes the transfer of sulfur to the sulfur carrier protein ThiS, forming ThiS-thiocarboxylate. This is a step in the synthesis of thiazole, in the thiamine biosynthesis pathway. The sulfur is donated as persulfide by IscS. The sequence is that of Probable tRNA sulfurtransferase from Halothermothrix orenii (strain H 168 / OCM 544 / DSM 9562).